A 761-amino-acid polypeptide reads, in one-letter code: Phosphoribosylformylglycinamidine synthase subunit PurL (761 aa).

Residues methionine 1–proline 16 are compositionally biased toward low complexity. Residues methionine 1–tyrosine 21 form a disordered region. Histidine 57 is a catalytic residue. Positions 60 and 101 each coordinate ATP. Glutamate 103 serves as a coordination point for Mg(2+). Substrate contacts are provided by residues serine 104–histidine 107 and arginine 126. Histidine 105 functions as the Proton acceptor in the catalytic mechanism. Aspartate 127 lines the Mg(2+) pocket. Glutamine 252 lines the substrate pocket. Residue aspartate 280 participates in Mg(2+) binding. Glutamate 329–glutamine 331 is a binding site for substrate. The ATP site is built by asparagine 519 and glycine 556. Asparagine 557 contributes to the Mg(2+) binding site. Serine 559 provides a ligand contact to substrate.

The protein belongs to the FGAMS family. As to quaternary structure, monomer. Part of the FGAM synthase complex composed of 1 PurL, 1 PurQ and 2 PurS subunits.

The protein resides in the cytoplasm. The enzyme catalyses N(2)-formyl-N(1)-(5-phospho-beta-D-ribosyl)glycinamide + L-glutamine + ATP + H2O = 2-formamido-N(1)-(5-O-phospho-beta-D-ribosyl)acetamidine + L-glutamate + ADP + phosphate + H(+). It functions in the pathway purine metabolism; IMP biosynthesis via de novo pathway; 5-amino-1-(5-phospho-D-ribosyl)imidazole from N(2)-formyl-N(1)-(5-phospho-D-ribosyl)glycinamide: step 1/2. Its function is as follows. Part of the phosphoribosylformylglycinamidine synthase complex involved in the purines biosynthetic pathway. Catalyzes the ATP-dependent conversion of formylglycinamide ribonucleotide (FGAR) and glutamine to yield formylglycinamidine ribonucleotide (FGAM) and glutamate. The FGAM synthase complex is composed of three subunits. PurQ produces an ammonia molecule by converting glutamine to glutamate. PurL transfers the ammonia molecule to FGAR to form FGAM in an ATP-dependent manner. PurS interacts with PurQ and PurL and is thought to assist in the transfer of the ammonia molecule from PurQ to PurL. In Frankia casuarinae (strain DSM 45818 / CECT 9043 / HFP020203 / CcI3), this protein is Phosphoribosylformylglycinamidine synthase subunit PurL.